Here is a 347-residue protein sequence, read N- to C-terminus: Peptidoglycan recognition protein 3 (347 aa).

Residues 1–26 form the signal peptide; it reads MLVSWDHPKMLPRLLGFLALSLLACG. 2 N-acetylmuramoyl-L-alanine amidase domains span residues 77 to 185 and 206 to 328; these read LQSQ…KACP and PAKF…VSNI. Asn-120 is a glycosylation site (N-linked (GlcNAc...) asparagine). 3 cysteine pairs are disulfide-bonded: Cys-184-Cys-306, Cys-200-Cys-244, and Cys-220-Cys-226. Positions 237 and 248 each coordinate peptidoglycan. The tract at residues 270 to 275 is interaction with murein; that stretch reads HTYGYN.

It belongs to the N-acetylmuramoyl-L-alanine amidase 2 family. In terms of assembly, monomer. Homodimer; disulfide-linked. Heterodimer with PGLYRP4; disulfide-linked. Detected in lung, spleen and stomach, and at low levels in eye, heart, thymus and testis.

It is found in the secreted. In terms of biological role, pattern receptor that binds to murein peptidoglycans (PGN) of Gram-positive bacteria. Has bactericidal activity towards Gram-positive bacteria. May kill Gram-positive bacteria by interfering with peptidoglycan biosynthesis. Also binds to Gram-negative bacteria, and has bacteriostatic activity towards Gram-negative bacteria. Plays a role in innate immunity. The protein is Peptidoglycan recognition protein 3 (Pglyrp3) of Mus musculus (Mouse).